The chain runs to 833 residues: Leucine--tRNA ligase (833 aa).

A 'HIGH' region motif is present at residues 41–52 (PYPSGAGLHVGH). The 'KMSKS' region motif lies at 610 to 614 (KMSKS). Residue Lys613 participates in ATP binding.

It belongs to the class-I aminoacyl-tRNA synthetase family.

The protein resides in the cytoplasm. The enzyme catalyses tRNA(Leu) + L-leucine + ATP = L-leucyl-tRNA(Leu) + AMP + diphosphate. This chain is Leucine--tRNA ligase, found in Streptococcus pyogenes serotype M3 (strain ATCC BAA-595 / MGAS315).